The sequence spans 417 residues: Membrane protein UL43 (417 aa).

The segment at 1-21 is disordered; that stretch reads MLRNDSHRAVSPEDGQGRVDD. Helical transmembrane passes span 57–77, 90–110, 119–139, 146–166, and 175–195; these read GPYANAASGAFAVGCAVLGFM, IYAWLKLAAGGAALVLWSLGE, APGPATQCLALGAAYAALLVL, LFLLAPGPLFVGTLGMVVGGL, and WWIGGPAAAALAAAVLAGPGA. Positions 217–254 are disordered; that stretch reads AGESLSRRPPEDPERPGVPGPPSPPTPQRSHGPPADEV. Over residues 221 to 231 the composition is skewed to basic and acidic residues; sequence LSRRPPEDPER. Residues 232-243 are compositionally biased toward pro residues; that stretch reads PGVPGPPSPPTP. 5 consecutive transmembrane segments (helical) span residues 263 to 283, 291 to 311, 323 to 343, 348 to 368, and 389 to 409; these read ENVWVPVVTFLGAGALAVKTV, PGPGLPLWPQVFLGGHVAVAL, LTDPLLFVHAGLQVINLGLVF, VVVYAALGGAVWISLAQVLGL, and GLFFSVYALGFGVGVLLCPPG.

It belongs to the alphaherpesvirinae HHV-1 UL43 family.

It is found in the membrane. This chain is Membrane protein UL43, found in Human herpesvirus 1 (strain 17) (HHV-1).